The following is a 1009-amino-acid chain: Protein translocase subunit SecA (1009 aa).

Residues glutamine 86, 104 to 108 (GEGKT), and aspartate 497 contribute to the ATP site. Disordered regions lie at residues 869–894 (AVPQ…GQQP) and 949–1009 (ERRP…RNAG). Composition is skewed to low complexity over residues 883 to 894 (PVPAATAPGQQP) and 953 to 973 (SGAA…AGAG). 4 residues coordinate Zn(2+): cysteine 990, cysteine 992, cysteine 1001, and histidine 1002.

The protein belongs to the SecA family. As to quaternary structure, monomer and homodimer. Part of the essential Sec protein translocation apparatus which comprises SecA, SecYEG and auxiliary proteins SecDF. Other proteins may also be involved. Zn(2+) serves as cofactor.

The protein localises to the cell membrane. Its subcellular location is the cytoplasm. It carries out the reaction ATP + H2O + cellular proteinSide 1 = ADP + phosphate + cellular proteinSide 2.. In terms of biological role, part of the Sec protein translocase complex. Interacts with the SecYEG preprotein conducting channel. Has a central role in coupling the hydrolysis of ATP to the transfer of proteins into and across the cell membrane, serving as an ATP-driven molecular motor driving the stepwise translocation of polypeptide chains across the membrane. The chain is Protein translocase subunit SecA from Acidothermus cellulolyticus (strain ATCC 43068 / DSM 8971 / 11B).